An 894-amino-acid chain; its full sequence is Leucine--tRNA ligase, mitochondrial (894 aa).

A mitochondrion-targeting transit peptide spans 1–9 (MLSRPSSRF). Residues 56 to 66 (PYPSGALHIGH) carry the 'HIGH' region motif. The 'KMSKS' region signature appears at 646-650 (KMSKS). Residue Lys-649 participates in ATP binding.

It belongs to the class-I aminoacyl-tRNA synthetase family.

It is found in the mitochondrion matrix. It carries out the reaction tRNA(Leu) + L-leucine + ATP = L-leucyl-tRNA(Leu) + AMP + diphosphate. Catalyzes the attachment of leucine to tRNA(Leu) in the mitochondrion. The sequence is that of Leucine--tRNA ligase, mitochondrial (NAM2) from Saccharomyces cerevisiae (strain ATCC 204508 / S288c) (Baker's yeast).